Reading from the N-terminus, the 222-residue chain is Collectrin (222 aa).

The N-terminal stretch at 1–14 (MLWALFFLVTTIHA) is a signal peptide. The Extracellular portion of the chain corresponds to 15 to 141 (ELCRPDAENA…LAPPMDPSVP (127 aa)). The region spanning 21-222 (AENAFKVRLS…LTEDERLTPL (202 aa)) is the Collectrin-like domain. Residues N76 and N93 are each glycosylated (N-linked (GlcNAc...) asparagine). A helical transmembrane segment spans residues 142–162 (VWIIVFGVIFCIVTVAIALLV). The Cytoplasmic portion of the chain corresponds to 163–222 (LSGIRQRRRNKKGPPGVEDAEDKCENIITIENGIPCDPLDMKGGHINDGFLTEDERLTPL). 2 positions are modified to phosphothreonine: T214 and T220.

Belongs to the CLTRN family. Monomer. Homodimer; dimerization prevents CLTRN cleavage by BACE2. Interacts with SLC6A18; this interaction regulates the trafficking of SLC6A18 to the cell membrane and its amino acid transporter activity. Interacts with SLC6A19; this interaction regulates the trafficking of SLC6A19 to the cell membrane and its amino acid transporter activity. Interacts with SNAPIN. Glycosylated. Glycosylation is required for plasma membrane localization and for its cleavage by BACE2. Post-translationally, proteolytically processed in pancreatic beta cells by BACE2 leading to the generation and extracellular release of soluble CLTRN, and a corresponding cell-associated C-terminal fragment which is later cleaved by gamma-secretase. This shedding process inactivates CLTRN. Three cleavage sites have been identified for BACE2, two clustered sites after Phe-116 and Leu-118 and a more membrane proximal site at Phe-125; the preferred BACE2 cleavage site seems to be between Phe-125 and Leu-126, Phe-116 and Leu-118 act as alternative sites. As to expression, kidney; collecting ducts. Pancreas; beta cells of islets.

It is found in the cell membrane. Plays an important role in amino acid transport by acting as binding partner of amino acid transporters SLC6A18 and SLC6A19, regulating their trafficking on the cell surface and their activity. May also play a role in trafficking of amino acid transporters SLC3A1 and SLC7A9 to the renal cortical cell membrane. Regulator of SNARE complex function. Stimulator of beta cell replication. In Rattus norvegicus (Rat), this protein is Collectrin.